A 518-amino-acid chain; its full sequence is GMP synthase [glutamine-hydrolyzing] (518 aa).

The region spanning 13–203 (KIIVLDFGSQ…ALNVCGCKGD (191 aa)) is the Glutamine amidotransferase type-1 domain. Residue Cys-90 is the Nucleophile of the active site. Active-site residues include His-177 and Glu-179. The GMPS ATP-PPase domain occupies 204-393 (WTMENFSEVE…LGMPDAIVWR (190 aa)). 231-237 (SGGVDSS) serves as a coordination point for ATP.

Homodimer.

It carries out the reaction XMP + L-glutamine + ATP + H2O = GMP + L-glutamate + AMP + diphosphate + 2 H(+). It participates in purine metabolism; GMP biosynthesis; GMP from XMP (L-Gln route): step 1/1. In terms of biological role, catalyzes the synthesis of GMP from XMP. The polypeptide is GMP synthase [glutamine-hydrolyzing] (Listeria welshimeri serovar 6b (strain ATCC 35897 / DSM 20650 / CCUG 15529 / CIP 8149 / NCTC 11857 / SLCC 5334 / V8)).